The sequence spans 319 residues: ATP-dependent 6-phosphofructokinase (319 aa).

ATP is bound by residues glycine 10, 71–72, and 101–104; these read RS and GDGS. Aspartate 102 is a binding site for Mg(2+). 125 to 127 provides a ligand contact to substrate; the sequence is TID. Aspartate 127 serves as the catalytic Proton acceptor. Arginine 154 serves as a coordination point for ADP. Substrate-binding positions include arginine 162 and 169–171; that span reads MGR. 185-187 serves as a coordination point for ADP; the sequence is GAE. Substrate is bound by residues glutamate 223, arginine 244, and 250–253; that span reads HVQR.

This sequence belongs to the phosphofructokinase type A (PFKA) family. ATP-dependent PFK group I subfamily. Prokaryotic clade 'B1' sub-subfamily. In terms of assembly, homotetramer. Mg(2+) is required as a cofactor.

Its subcellular location is the cytoplasm. It carries out the reaction beta-D-fructose 6-phosphate + ATP = beta-D-fructose 1,6-bisphosphate + ADP + H(+). It functions in the pathway carbohydrate degradation; glycolysis; D-glyceraldehyde 3-phosphate and glycerone phosphate from D-glucose: step 3/4. With respect to regulation, allosterically activated by ADP and other diphosphonucleosides, and allosterically inhibited by phosphoenolpyruvate. Functionally, catalyzes the phosphorylation of D-fructose 6-phosphate to fructose 1,6-bisphosphate by ATP, the first committing step of glycolysis. This chain is ATP-dependent 6-phosphofructokinase, found in Wolinella succinogenes (strain ATCC 29543 / DSM 1740 / CCUG 13145 / JCM 31913 / LMG 7466 / NCTC 11488 / FDC 602W) (Vibrio succinogenes).